Reading from the N-terminus, the 249-residue chain is Probable transcriptional regulatory protein Meso_3192 (249 aa).

This sequence belongs to the TACO1 family.

The protein resides in the cytoplasm. The polypeptide is Probable transcriptional regulatory protein Meso_3192 (Chelativorans sp. (strain BNC1)).